Reading from the N-terminus, the 206-residue chain is tRNA(Phe) 7-((3-amino-3-carboxypropyl)-4-demethylwyosine(37)-N(4))-methyltransferase 2 (206 aa).

Belongs to the TYW3 family.

It catalyses the reaction 4-demethyl-7-[(3S)-3-amino-3-carboxypropyl]wyosine(37) in tRNA(Phe) + S-adenosyl-L-methionine = 7-[(3S)-3-amino-3-carboxypropyl]wyosine(37) in tRNA(Phe) + S-adenosyl-L-homocysteine + H(+). S-adenosyl-L-methionine-dependent methyltransferase that acts as a component of the wyosine derivatives biosynthesis pathway. Probably methylates N-4 position of wybutosine-86 to produce wybutosine-72. The polypeptide is tRNA(Phe) 7-((3-amino-3-carboxypropyl)-4-demethylwyosine(37)-N(4))-methyltransferase 2 (Pyrococcus furiosus (strain ATCC 43587 / DSM 3638 / JCM 8422 / Vc1)).